The sequence spans 387 residues: Succinate--CoA ligase [ADP-forming] subunit beta (387 aa).

Residues 9–245 enclose the ATP-grasp domain; sequence KDLLESYGLK…KSQENAKELK (237 aa). ATP contacts are provided by residues Lys-46, 53 to 55, Glu-100, Tyr-103, and Glu-108; that span reads GRG. Mg(2+)-binding residues include Asn-200 and Asp-214. Substrate is bound by residues Asn-265 and 322-324; that span reads GIV.

It belongs to the succinate/malate CoA ligase beta subunit family. Heterotetramer of two alpha and two beta subunits. It depends on Mg(2+) as a cofactor.

It carries out the reaction succinate + ATP + CoA = succinyl-CoA + ADP + phosphate. The catalysed reaction is GTP + succinate + CoA = succinyl-CoA + GDP + phosphate. It participates in carbohydrate metabolism; tricarboxylic acid cycle; succinate from succinyl-CoA (ligase route): step 1/1. Functionally, succinyl-CoA synthetase functions in the citric acid cycle (TCA), coupling the hydrolysis of succinyl-CoA to the synthesis of either ATP or GTP and thus represents the only step of substrate-level phosphorylation in the TCA. The beta subunit provides nucleotide specificity of the enzyme and binds the substrate succinate, while the binding sites for coenzyme A and phosphate are found in the alpha subunit. This is Succinate--CoA ligase [ADP-forming] subunit beta from Francisella tularensis subsp. holarctica (strain FTNF002-00 / FTA).